We begin with the raw amino-acid sequence, 84 residues long: Toxin Ts4 (84 aa).

The N-terminal stretch at 1 to 19 (MKRMILFISCLLLIDIVVG) is a signal peptide. One can recognise an LCN-type CS-alpha/beta domain in the interval 21-82 (REGYPADSKG…IWTSETNKCG (62 aa)). 4 disulfides stabilise this stretch: Cys-31/Cys-81, Cys-35/Cys-57, Cys-43/Cys-62, and Cys-47/Cys-64. Cys-81 bears the Cysteine amide mark. Residues 82–84 (GKK) constitute a propeptide that is removed on maturation.

It belongs to the long (4 C-C) scorpion toxin superfamily. Sodium channel inhibitor family. Alpha subfamily. In terms of tissue distribution, expressed by the venom gland.

Its subcellular location is the secreted. Its function is as follows. Not toxic. Induces an immune response similar to that induced by whole venom. Induces a dose dependent release of the neurotransmitters glutamic acid and gamma aminobutyric acid from rat brain synaptosomes. Thus, polyclonal antibodies raised against this protein can neutralize the effects of the venom. This Tityus serrulatus (Brazilian scorpion) protein is Toxin Ts4.